Consider the following 299-residue polypeptide: Homeobox protein Nkx-2.5 (299 aa).

The segment covering 90–119 (KDPKDHKKDICPLQKTLEHDKREAEDPERP) has biased composition (basic and acidic residues). Positions 90–128 (KDPKDHKKDICPLQKTLEHDKREAEDPERPRQRKRRKPR) are disordered. Positions 124-183 (RRKPRVLFSQAQVYELERRFKQQKYLSAPERDHLANVLKLTSTQVKIWFQNRRYKCKRQR) form a DNA-binding region, homeobox.

Belongs to the NK-2 homeobox family. As to quaternary structure, homodimer (via the homeobox); binds DNA as homodimer. In terms of tissue distribution, heart and gut tissue.

Its subcellular location is the nucleus. Functionally, transcription factor required for the development of the heart and the spleen. Implicated in commitment to and/or differentiation of the myocardial lineage. May regulate the expression of genes involved in cardiogenesis and play a role in the formation of gut and the pharyngeal region. Binds to the core DNA motif of promoter. The chain is Homeobox protein Nkx-2.5 (nkx-2.5) from Xenopus laevis (African clawed frog).